An 816-amino-acid polypeptide reads, in one-letter code: Fibroblast growth factor receptor (816 aa).

The N-terminal stretch at 1 to 19 (MISDWCVVLVLLMSRLVFG) is a signal peptide. At 20-370 (LNFTEPVNYI…YKEESVEKTV (351 aa)) the chain is on the extracellular side. Residues asparagine 21, asparagine 69, asparagine 119, asparagine 156, asparagine 171, asparagine 244, asparagine 274, asparagine 313, and asparagine 321 are each glycosylated (N-linked (GlcNAc...) asparagine). One can recognise an Ig-like C2-type 1 domain in the interval 25 to 105 (PVNYILKLGE…VTAMNEESVQ (81 aa)). Cysteine 43 and cysteine 94 form a disulfide bridge. One can recognise an Ig-like C2-type 2 domain in the interval 126–217 (LRIKNDISLL…GKIEHIMTVE (92 aa)). Cysteine 147 and cysteine 201 are joined by a disulfide. Residues 371–391 (IFIVITSMLAGLIFVAFVIFF) form a helical membrane-spanning segment. At 392–816 (ICRVRSKDKF…DILLSHYAVS (425 aa)) the chain is on the cytoplasmic side. A Protein kinase domain is found at 474–747 (LETDCLLGEG…QLIEDLERML (274 aa)). ATP is bound by residues 480–488 (LGEGAFGRV) and lysine 508. Aspartate 612 acts as the Proton acceptor in catalysis. Tyrosine 643 is subject to Phosphotyrosine; by autocatalysis.

This sequence belongs to the protein kinase superfamily. Tyr protein kinase family. Fibroblast growth factor receptor subfamily.

The protein localises to the membrane. The enzyme catalyses L-tyrosyl-[protein] + ATP = O-phospho-L-tyrosyl-[protein] + ADP + H(+). In terms of biological role, receptor for basic fibroblast growth factor. This is Fibroblast growth factor receptor (FGFR) from Hydra vulgaris (Hydra).